The chain runs to 356 residues: Phosphoribosylformylglycinamidine cyclo-ligase (356 aa).

The protein belongs to the AIR synthase family.

Its subcellular location is the cytoplasm. The catalysed reaction is 2-formamido-N(1)-(5-O-phospho-beta-D-ribosyl)acetamidine + ATP = 5-amino-1-(5-phospho-beta-D-ribosyl)imidazole + ADP + phosphate + H(+). Its pathway is purine metabolism; IMP biosynthesis via de novo pathway; 5-amino-1-(5-phospho-D-ribosyl)imidazole from N(2)-formyl-N(1)-(5-phospho-D-ribosyl)glycinamide: step 2/2. This is Phosphoribosylformylglycinamidine cyclo-ligase from Acinetobacter baumannii (strain AB307-0294).